Consider the following 431-residue polypeptide: MSTLIEAIIAREVLDSRGNPTIEVDVRLESGDVGRAIVPSGASTGAHEALELRDGDKSRYNGKGVLKAVQAVNEDIAEALIGFDAADQIALDNELIALDGTPNKSKLGANAILGVSLAAAKAAAAAFGLPLYRYLGGVYAHVLPVPMMNIMNGGQHATNSTDFQEFMIMPVGADSFREGLRWGAEIYHALKKVIHDRGFSTTVGDEGGFAPSLPTNDAPLQLIMEAIEKAGYRPGEQIYIALDPATTEIYEDGKYHLKREGRVLTSAEMVDYWVDLVNRYPIISIEDGLAEDDWEGWQLLRSKLGHKIQLVGDDFLVTNVQRLRRAIDARAANSILIKLNQIGSLTETLSAIQLAQRSGWTAVVSHRSGESEDVTIADLVVATNAGQIKTGAPARTDRIAKYNQLLRIEEELGSAAQYAGRNAFTSIPHPL.

A (2R)-2-phosphoglycerate-binding site is contributed by glutamine 164. The active-site Proton donor is glutamate 206. The Mg(2+) site is built by aspartate 243, glutamate 286, and aspartate 313. 4 residues coordinate (2R)-2-phosphoglycerate: lysine 338, arginine 367, serine 368, and lysine 389. Lysine 338 acts as the Proton acceptor in catalysis.

This sequence belongs to the enolase family. The cofactor is Mg(2+).

The protein localises to the cytoplasm. It localises to the secreted. Its subcellular location is the cell surface. The catalysed reaction is (2R)-2-phosphoglycerate = phosphoenolpyruvate + H2O. Its pathway is carbohydrate degradation; glycolysis; pyruvate from D-glyceraldehyde 3-phosphate: step 4/5. In terms of biological role, catalyzes the reversible conversion of 2-phosphoglycerate (2-PG) into phosphoenolpyruvate (PEP). It is essential for the degradation of carbohydrates via glycolysis. The sequence is that of Enolase from Chloroflexus aggregans (strain MD-66 / DSM 9485).